We begin with the raw amino-acid sequence, 332 residues long: Methionine import ATP-binding protein MetN (332 aa).

One can recognise an ABC transporter domain in the interval 2–241; the sequence is IELKGLTKVF…PGSRLRELFY (240 aa). 38–45 serves as a coordination point for ATP; the sequence is GQSGAGKS.

Belongs to the ABC transporter superfamily. Methionine importer (TC 3.A.1.24) family. In terms of assembly, the complex is composed of two ATP-binding proteins (MetN), two transmembrane proteins (MetI) and a solute-binding protein (MetQ).

The protein localises to the cell membrane. It catalyses the reaction L-methionine(out) + ATP + H2O = L-methionine(in) + ADP + phosphate + H(+). The enzyme catalyses D-methionine(out) + ATP + H2O = D-methionine(in) + ADP + phosphate + H(+). In terms of biological role, part of the ABC transporter complex MetNIQ involved in methionine import. Responsible for energy coupling to the transport system. This chain is Methionine import ATP-binding protein MetN, found in Symbiobacterium thermophilum (strain DSM 24528 / JCM 14929 / IAM 14863 / T).